A 370-amino-acid polypeptide reads, in one-letter code: Phospho-N-acetylmuramoyl-pentapeptide-transferase (370 aa).

Transmembrane regions (helical) follow at residues 31-51, 73-93, 98-118, 135-155, 177-197, 209-229, 251-271, 273-293, 298-318, and 347-367; these read LTSM…LYGL, TMGG…WGNL, IIVL…DDYM, LLSI…TGVI, GPVL…IIGS, GLAT…AYVS, VFLS…AHPA, VFMG…IVIL, ILLL…ILQV, and KIVI…LSTL.

This sequence belongs to the glycosyltransferase 4 family. MraY subfamily. Requires Mg(2+) as cofactor.

It localises to the cell inner membrane. The enzyme catalyses UDP-N-acetyl-alpha-D-muramoyl-L-alanyl-gamma-D-glutamyl-meso-2,6-diaminopimeloyl-D-alanyl-D-alanine + di-trans,octa-cis-undecaprenyl phosphate = di-trans,octa-cis-undecaprenyl diphospho-N-acetyl-alpha-D-muramoyl-L-alanyl-D-glutamyl-meso-2,6-diaminopimeloyl-D-alanyl-D-alanine + UMP. It participates in cell wall biogenesis; peptidoglycan biosynthesis. Catalyzes the initial step of the lipid cycle reactions in the biosynthesis of the cell wall peptidoglycan: transfers peptidoglycan precursor phospho-MurNAc-pentapeptide from UDP-MurNAc-pentapeptide onto the lipid carrier undecaprenyl phosphate, yielding undecaprenyl-pyrophosphoryl-MurNAc-pentapeptide, known as lipid I. In Leptospira borgpetersenii serovar Hardjo-bovis (strain JB197), this protein is Phospho-N-acetylmuramoyl-pentapeptide-transferase.